A 66-amino-acid chain; its full sequence is Large ribosomal subunit protein bL33c (66 aa).

It belongs to the bacterial ribosomal protein bL33 family.

The protein resides in the plastid. Its subcellular location is the chloroplast. This Drimys granadensis protein is Large ribosomal subunit protein bL33c.